Here is a 260-residue protein sequence, read N- to C-terminus: MADS-box transcription factor 29 (260 aa).

One can recognise an MADS-box domain in the interval 1–61 (MGRGKIEIKR…GKMFEYCSPT (61 aa)). One can recognise a K-box domain in the interval 85 to 175 (DQQIFVEMTR…CRMINENHHQ (91 aa)).

In terms of tissue distribution, expressed in developing seeds.

The protein resides in the nucleus. Probable transcription factor. The protein is MADS-box transcription factor 29 (MADS29) of Oryza sativa subsp. japonica (Rice).